Reading from the N-terminus, the 242-residue chain is N-alpha-acetyltransferase 60 (242 aa).

The Cytoplasmic portion of the chain corresponds to 1-192 (MTEVVPSSAL…GGHPPWTILD (192 aa)). An N-acetyltransferase domain is found at 13 to 182 (VSLRLLCHDD…DGFTYVLYIN (170 aa)). Y38 provides a ligand contact to substrate. Residue K79 is modified to N6-acetyllysine; by autocatalysis. Residue Y97 is part of the active site. Residue L99 participates in substrate binding. 101-103 (LGV) is a binding site for acetyl-CoA. An N6-acetyllysine; by autocatalysis mark is found at K105, K109, and K121. Residue 109-114 (KHGIGS) coordinates acetyl-CoA. H138 is an active-site residue. Acetyl-CoA-binding positions include N143 and 150–153 (YENR). The segment at 162 to 173 (PYYYSIRGVLKD) is required for homodimerization. Y165 is a binding site for substrate. Positions 193-236 (YIQHLGSALANLSPCSIPHRIYRQAHSLLCSFLPWSSISTKGGI) form an intramembrane region, helical. Residues 237 to 242 (EYSRTM) are Cytoplasmic-facing.

Belongs to the acetyltransferase family. NAA60 subfamily. Monomer and homodimer; monomer in presence of substrate and homodimer in its absence. Acetylated: autoacetylation is required for optimal acetyltransferase activity.

The protein resides in the golgi apparatus membrane. It carries out the reaction N-terminal L-methionyl-[transmembrane protein] + acetyl-CoA = N-terminal N(alpha)-acetyl-L-methionyl-[transmembrane protein] + CoA + H(+). The catalysed reaction is L-lysyl-[protein] + acetyl-CoA = N(6)-acetyl-L-lysyl-[protein] + CoA + H(+). Its function is as follows. N-alpha-acetyltransferase that specifically mediates the acetylation of N-terminal residues of the transmembrane proteins, with a strong preference for N-termini facing the cytosol. Displays N-terminal acetyltransferase activity towards a range of N-terminal sequences including those starting with Met-Lys, Met-Val, Met-Ala and Met-Met. Required for normal chromosomal segregation during anaphase. May also show histone acetyltransferase activity; such results are however unclear in vivo and would require additional experimental evidences. This Mus musculus (Mouse) protein is N-alpha-acetyltransferase 60 (Naa60).